The following is a 388-amino-acid chain: Probable proton-coupled zinc antiporter SLC30A3 (388 aa).

The segment at 1–46 (MEPSPAAGGLETTRLVSPRDRGGAGGSLRLKSLFTEPSEPLPEESK) is disordered. The Cytoplasmic portion of the chain corresponds to 1-75 (MEPSPAAGGL…TPERLHARRQ (75 aa)). The chain crosses the membrane as a helical span at residues 76-96 (LYAACAVCFVFMAGEVVGGYL). Over 97–105 (AHSLAIMTD) the chain is Lumenal. A helical membrane pass occupies residues 106 to 126 (AAHLLADVGSMMGSLFSLWLS). Zn(2+) is bound by residues H108 and D112. The Cytoplasmic segment spans residues 127–145 (TRPATRTMTFGWHRSETLG). Residues 146–166 (ALASVVSLWMVTGILLYLAFV) traverse the membrane as a helical segment. Topologically, residues 167–177 (RLLHSDYHIEG) are lumenal. Residues 178-198 (GAMLLTASIAVCANLLMAFVL) form a helical membrane-spanning segment. Topologically, residues 199–235 (HQAGPPHSHGSRGAEYAPLEEGPEEPLPLGNTSVRAA) are cytoplasmic. Residues 236-256 (FVHVLGDLLQSFGVLAASILI) traverse the membrane as a helical segment. Zn(2+) is bound by residues H238 and D242. The Lumenal segment spans residues 257 to 264 (YFKPQYKA). Residues 265 to 285 (ADPISTFLFSICALGSTAPTL) traverse the membrane as a helical segment. At 286–388 (RDVLRILMEG…CLRCQEPPQA (103 aa)) the chain is on the cytoplasmic side. A Dityrosine (Tyr-Tyr) (interchain with Y-372) cross-link involves residue Y357. A Dityrosine (Tyr-Tyr) (interchain with Y-357) cross-link involves residue Y372.

The protein belongs to the cation diffusion facilitator (CDF) transporter (TC 2.A.4) family. SLC30A subfamily. As to quaternary structure, homodimer; dityrosine-linked. Homodimerization seems specific of the human protein and enhances the zinc transport efficiency. Interacts with TMEM163. Post-translationally, homodimerization through dityrosine bonds is stimulated by oxidative stress.

It localises to the cytoplasmic vesicle. The protein localises to the secretory vesicle. It is found in the synaptic vesicle membrane. Its subcellular location is the synapse. The protein resides in the synaptosome. It localises to the late endosome membrane. The protein localises to the lysosome membrane. It carries out the reaction Zn(2+)(in) + 2 H(+)(out) = Zn(2+)(out) + 2 H(+)(in). Probable proton-coupled zinc ion antiporter mediating the import of zinc from cytoplasm into synaptic vesicles and participating to cellular zinc ion homeostasis in the brain. The chain is Probable proton-coupled zinc antiporter SLC30A3 from Homo sapiens (Human).